The primary structure comprises 399 residues: Serine/threonine-protein kinase PKZ1 (399 aa).

Positions 30–50 (PMQCAYQTQSHSNPEGAKRGR) are disordered. Residues 92 to 371 (WQLFDQIGAG…ADQMLQHPWM (280 aa)) form the Protein kinase domain. ATP contacts are provided by residues 98-106 (IGAGAFGVV) and Lys121. Asp219 (proton acceptor) is an active-site residue.

The protein belongs to the protein kinase superfamily. CAMK Ser/Thr protein kinase family. In terms of assembly, interacts with BZP1.

It carries out the reaction L-seryl-[protein] + ATP = O-phospho-L-seryl-[protein] + ADP + H(+). The catalysed reaction is L-threonyl-[protein] + ATP = O-phospho-L-threonyl-[protein] + ADP + H(+). Its function is as follows. May regulate an early stage of the zoospore pathway. The polypeptide is Serine/threonine-protein kinase PKZ1 (Phytophthora infestans (Potato late blight agent)).